Consider the following 79-residue polypeptide: Large ribosomal subunit protein bL28 (79 aa).

This sequence belongs to the bacterial ribosomal protein bL28 family.

This Christiangramia forsetii (strain DSM 17595 / CGMCC 1.15422 / KT0803) (Gramella forsetii) protein is Large ribosomal subunit protein bL28.